Consider the following 1827-residue polypeptide: Sucrase-isomaltase, intestinal (1827 aa).

Over 2-12 the chain is Cytoplasmic; the sequence is AKRKFSGLEIT. S7 bears the Phosphoserine; by PKA mark. Residues 13–32 form a helical; Signal-anchor for type II membrane protein membrane-spanning segment; that stretch reads LIVLFVIVFIIAIALIAVLA. At 33–1827 the chain is on the lumenal side; that stretch reads TKTPAVEEVN…LDDPIEISWS (1795 aa). Positions 39–64 are disordered; sequence EEVNPSSSTPTTTSTTTSTSGSVSCP. The span at 43–64 shows a compositional bias: low complexity; that stretch reads PSSSTPTTTSTTTSTSGSVSCP. The 50-residue stretch at 61 to 110 folds into the P-type 1 domain; sequence VSCPSELNEVVNERINCIPEQSPTQAICAQRNCCWRPWNNSDIPWCFFVD. Intrachain disulfides connect C63–C94, C77–C93, and C88–C106. N99 carries an N-linked (GlcNAc...) asparagine glycan. The segment at 110–1007 is isomaltase; that stretch reads DNHGYNVEGM…DLQLNPTRTR (898 aa). Substrate contacts are provided by D264 and D388. Sulfotyrosine occurs at positions 391 and 400. An N-linked (GlcNAc...) asparagine glycan is attached at N455. Catalysis depends on D505, which acts as the Nucleophile; for isomaltase activity. C520 and C545 form a disulfide bridge. R588 lines the substrate pocket. The For isomaltase activity role is filled by D604. C635 and C646 are oxidised to a cystine. H662 lines the substrate pocket. N-linked (GlcNAc...) asparagine glycosylation is found at N859, N896, and N904. The region spanning 932-978 is the P-type 2 domain; sequence DQTFLESEKITCYPDADIATQEKCTQRGCIWDTNTVNPRAPECYFPK. The tract at residues 1008–1827 is sucrase; that stretch reads ITLPSEPITN…LDDPIEISWS (820 aa). 6 N-linked (GlcNAc...) asparagine glycosylation sites follow: N1235, N1303, N1325, N1340, N1354, and N1368. Sulfotyrosine occurs at positions 1382 and 1385. D1394 (nucleophile; for sucrase activity) is an active-site residue. The active-site For sucrase activity is E1397. A glycan (N-linked (GlcNAc...) asparagine) is linked at N1403. Residue D1500 is the Proton donor; for sucrase activity of the active site. Residues N1535, N1572, N1748, N1763, and N1799 are each glycosylated (N-linked (GlcNAc...) asparagine).

This sequence belongs to the glycosyl hydrolase 31 family. As to quaternary structure, the resulting sucrase and isomaltase subunits stay associated with one another in a complex by non-covalent linkages. In terms of processing, the precursor is proteolytically cleaved when exposed to pancreatic proteases in the intestinal lumen. Post-translationally, N- and O-glycosylated. Sulfated.

Its subcellular location is the apical cell membrane. It catalyses the reaction Hydrolysis of sucrose and maltose by an alpha-D-glucosidase-type action.. It carries out the reaction Hydrolysis of (1-&gt;6)-alpha-D-glucosidic linkages in some oligosaccharides produced from starch and glycogen by alpha-amylase, and in isomaltose.. In terms of biological role, plays an important role in the final stage of carbohydrate digestion. Isomaltase activity is specific for both alpha-1,4- and alpha-1,6-oligosaccharides. This Oryctolagus cuniculus (Rabbit) protein is Sucrase-isomaltase, intestinal (SI).